Here is a 24-residue protein sequence, read N- to C-terminus: Brevinin-1Bc (24 aa).

A disulfide bond links C18 and C24.

As to expression, expressed by the skin glands.

It localises to the secreted. Functionally, antibacterial activity against Gram-positive bacterium S.aureus. This Lithobates berlandieri (Rio Grande leopard frog) protein is Brevinin-1Bc.